The primary structure comprises 221 residues: Uridylate kinase (221 aa).

Residue 7-11 participates in ATP binding; that stretch reads KISGK. Residue G43 participates in UMP binding. ATP is bound by residues G44 and R48. UMP-binding positions include D62 and 109–115; that span reads LQPGQST. Residues T135 and Y141 each coordinate ATP.

It belongs to the UMP kinase family. Homohexamer.

It is found in the cytoplasm. The catalysed reaction is UMP + ATP = UDP + ADP. It participates in pyrimidine metabolism; CTP biosynthesis via de novo pathway; UDP from UMP (UMPK route): step 1/1. Its activity is regulated as follows. Inhibited by UTP. In terms of biological role, catalyzes the reversible phosphorylation of UMP to UDP. This Ignicoccus hospitalis (strain KIN4/I / DSM 18386 / JCM 14125) protein is Uridylate kinase.